A 466-amino-acid chain; its full sequence is Asparagine--tRNA ligase (466 aa).

It belongs to the class-II aminoacyl-tRNA synthetase family. As to quaternary structure, homodimer.

It localises to the cytoplasm. It carries out the reaction tRNA(Asn) + L-asparagine + ATP = L-asparaginyl-tRNA(Asn) + AMP + diphosphate + H(+). The sequence is that of Asparagine--tRNA ligase from Shewanella sp. (strain ANA-3).